The chain runs to 70 residues: DNA-binding transcriptional activator AlpA (70 aa).

Residues 12 to 31 (LPAVIQKTGMARATIYDWLN) constitute a DNA-binding region (H-T-H motif).

In terms of biological role, positive regulator of the expression of the slpA gene. When overexpressed, leads to suppression of the capsule overproduction and UV sensitivity phenotypes of cells mutant for the Lon ATP-dependent protease. Part of the cryptic P4-like prophage CP4-57. Overexpression of AlpA leads to excision of the CP4-57 prophage by IntA. This inactivates ssrA (the gene upstream of the prophage) that encodes tmRNA which is required to rescue stalled ribosomes in a process known as trans-translation. The polypeptide is DNA-binding transcriptional activator AlpA (Escherichia coli (strain K12)).